An 881-amino-acid chain; its full sequence is Valine--tRNA ligase (881 aa).

The 'HIGH' region motif lies at 76 to 86 (PTVSGSLHIGH). The segment at 493 to 526 (DSPILPDESQLPVDPSSQAPEGYTEDQRGKPGGF) is disordered. The 'KMSKS' region motif lies at 608 to 612 (KMSKS). Lys-611 serves as a coordination point for ATP.

The protein belongs to the class-I aminoacyl-tRNA synthetase family. ValS type 2 subfamily. In terms of assembly, monomer.

It localises to the cytoplasm. It carries out the reaction tRNA(Val) + L-valine + ATP = L-valyl-tRNA(Val) + AMP + diphosphate. Catalyzes the attachment of valine to tRNA(Val). As ValRS can inadvertently accommodate and process structurally similar amino acids such as threonine, to avoid such errors, it has a 'posttransfer' editing activity that hydrolyzes mischarged Thr-tRNA(Val) in a tRNA-dependent manner. This is Valine--tRNA ligase from Thermobifida fusca (strain YX).